The chain runs to 415 residues: MKSTVKKRGWVIAGIVVVALAALLYWRYAATEAPSGKAQHAGGRAAMRMGSAPAPVQAATARSEAVPRYLTGLGTITAANTVTVRSRVDGQLMAIHFKEGQQVKAGDLLAEIDPSQFKVALAQAQGQLAKDRATLANARRDLARYQQLGKTNLVSRQELDAQQALVSESEGTLKADEAAVASAQLQLDWSRITAPIDGRVGLKQVDIGNQISSGDTTGIVVLTQTHPIDLVFTLPESDIAAVMQAQKAGKPLTVEAWDRTNSTKLSTGELLSLDNQIDATTGTIKLKARFANEDDALFPNQFVNARMLIDTQQNAVVIPTAALQMGNEGHFVWVLNDDNKVSKHTVTTGIQNSESVVITAGLSAGDRVVTDGIDRLTEGAKVDVVEAQTAADAAKPERGERAPTDSARAAKGARS.

The first 21 residues, 1–21, serve as a signal peptide directing secretion; the sequence is MKSTVKKRGWVIAGIVVVALA. The disordered stretch occupies residues 387–415; the sequence is AQTAADAAKPERGERAPTDSARAAKGARS. Residues 394–403 show a composition bias toward basic and acidic residues; that stretch reads AKPERGERAP.

The protein belongs to the membrane fusion protein (MFP) (TC 8.A.1) family. Part of a tripartite efflux system composed of MdtA, MdtB and MdtC.

It is found in the cell inner membrane. The chain is Multidrug resistance protein MdtA from Cronobacter turicensis (strain DSM 18703 / CCUG 55852 / LMG 23827 / z3032).